We begin with the raw amino-acid sequence, 295 residues long: Protease HtpX homolog (295 aa).

A run of 2 helical transmembrane segments spans residues 6–26 and 40–60; these read IGLF…VTSV and LSSL…VSLL. His148 provides a ligand contact to Zn(2+). Glu149 is an active-site residue. Residue His152 coordinates Zn(2+). 2 helical membrane-spanning segments follow: residues 163–183 and 198–218; these read LIQG…SYAL and ISNI…VAYF. Glu223 provides a ligand contact to Zn(2+).

It belongs to the peptidase M48B family. Requires Zn(2+) as cofactor.

It localises to the cell inner membrane. The chain is Protease HtpX homolog from Leptospira borgpetersenii serovar Hardjo-bovis (strain JB197).